Consider the following 268-residue polypeptide: 14-3-3-like protein GF14 iota (268 aa).

Ser70 and Ser193 each carry phosphoserine. Phosphothreonine is present on Thr214. A disordered region spans residues 240 to 268 (DLPEDGGEDNIKTEESKQEQAKPADATEN). A compositionally biased stretch (basic and acidic residues) spans 248–261 (DNIKTEESKQEQAK).

It belongs to the 14-3-3 family. Expressed in flowers.

Its subcellular location is the nucleus. It localises to the cytoplasm. In terms of biological role, is associated with a DNA binding complex that binds to the G box, a well-characterized cis-acting DNA regulatory element found in plant genes. The sequence is that of 14-3-3-like protein GF14 iota from Arabidopsis thaliana (Mouse-ear cress).